The following is a 763-amino-acid chain: Phosphoglycerol transferase I (763 aa).

4 consecutive transmembrane segments (helical) span residues 1–21 (MSELLSVALFLASVLIYAWKA), 26–46 (WWFAATLTVLGLFVILNITLY), 77–97 (ILPGIGIALALVAVFGALGWI), and 108–128 (VGYSLLALLLALGSVDASPAF).

It belongs to the OpgB family.

Its subcellular location is the cell inner membrane. It carries out the reaction a phosphatidylglycerol + a membrane-derived-oligosaccharide D-glucose = a 1,2-diacyl-sn-glycerol + a membrane-derived-oligosaccharide 6-(glycerophospho)-D-glucose.. It functions in the pathway glycan metabolism; osmoregulated periplasmic glucan (OPG) biosynthesis. In terms of biological role, transfers a phosphoglycerol residue from phosphatidylglycerol to the membrane-bound nascent glucan backbones. This Salmonella newport (strain SL254) protein is Phosphoglycerol transferase I.